Here is a 134-residue protein sequence, read N- to C-terminus: MTNIRKTHPLLKIINSSFVDLPAPSSLSSWWNFGSLLGVCLAVQILTGLFLAMHYTSDTATAFNSVTHICRDVNYGWLLRYLHANGASMFFICLYLHVGRGLYYGSYTYSETWNVGILLLFAVMATAFMGYVLP.

A run of 3 helical transmembrane segments spans residues 33 to 53 (FGSL…FLAM), 77 to 98 (WLLR…YLHV), and 113 to 133 (WNVG…GYVL). Heme b is bound by residues His83 and His97.

Belongs to the cytochrome b family. The cytochrome bc1 complex contains 11 subunits: 3 respiratory subunits (MT-CYB, CYC1 and UQCRFS1), 2 core proteins (UQCRC1 and UQCRC2) and 6 low-molecular weight proteins (UQCRH/QCR6, UQCRB/QCR7, UQCRQ/QCR8, UQCR10/QCR9, UQCR11/QCR10 and a cleavage product of UQCRFS1). This cytochrome bc1 complex then forms a dimer. The cofactor is heme b.

The protein resides in the mitochondrion inner membrane. In terms of biological role, component of the ubiquinol-cytochrome c reductase complex (complex III or cytochrome b-c1 complex) that is part of the mitochondrial respiratory chain. The b-c1 complex mediates electron transfer from ubiquinol to cytochrome c. Contributes to the generation of a proton gradient across the mitochondrial membrane that is then used for ATP synthesis. This chain is Cytochrome b (MT-CYB), found in Chiroderma trinitatum (Little big-eyed bat).